Here is a 95-residue protein sequence, read N- to C-terminus: ESAT-6-like protein EsxA (95 aa).

The protein belongs to the WXG100 family. ESAT-6 subfamily. As to quaternary structure, forms a tight 1:1 complex with EsxB. An artificial EsxA-EsxB heterodimer interacts with EspA.

The protein localises to the secreted. An exported protein. Unlike its M.tuberculosis counterpart has poor pore forming ability in artificial liposomes, does not undergo conformational change at acidic pH. Mutation of 2 residues to those found in M.tuberculosis (25-TA-26 to IH) alters the properties of this protein so that it inserts into liposomes at acidic pH, forming pores, like its M.tuberculosis counterpart. This is ESAT-6-like protein EsxA from Mycolicibacterium smegmatis (strain ATCC 700084 / mc(2)155) (Mycobacterium smegmatis).